The primary structure comprises 535 residues: Triacylglyceride transporter MHAS_02168/C731_2106 (535 aa).

The Cytoplasmic portion of the chain corresponds to 1–18 (MAFPQTPNRLIRPRRTSR). A helical membrane pass occupies residues 19-39 (GIAISAGGLAVLLGALDTYVV). Topologically, residues 40-60 (VSIVTDIMRDVGIAVNQIQRV) are periplasmic. Residues 61–82 (TPIITGYLLGYIAAMPLLGRAS) traverse the membrane as a helical segment. The Cytoplasmic portion of the chain corresponds to 83 to 86 (DRFG). The chain crosses the membrane as a helical span at residues 87–107 (RKLLIQISLAGFALGSVITAL). Residues 108–111 (ATNL) are Periplasmic-facing. Residues 112-136 (DVLVAGRVIQGAASGALLPVTLALA) traverse the membrane as a helical segment. Residues 137-145 (ADLWATHKR) are Cytoplasmic-facing. Residues 146-167 (AAVLGGVGAAQELGAVLGPIYG) form a helical membrane-spanning segment. Residues 168–177 (IFVVWLFHHW) lie on the Periplasmic side of the membrane. The chain crosses the membrane as a helical span at residues 178–198 (QAVFWVNVPLALIAMVLIHIS). Topologically, residues 199–212 (LPPRVRTEEPQRVD) are cytoplasmic. The helical transmembrane segment at 213–230 (VTGGLLLALALGLATIGL) threads the bilayer. The Periplasmic portion of the chain corresponds to 231–243 (YNAEPDGKQVLPE). A helical transmembrane segment spans residues 244-263 (YGPPLIIGAVIAAVAFLVWE). At 264-278 (RFARTRLLDPAGVRF) the chain is on the cytoplasmic side. The chain crosses the membrane as a helical span at residues 279 to 300 (RPFLIALLVSLVTGGALMVTLV). Over 301–320 (NVELFGQGVLGLDQDEAVFL) the chain is Periplasmic. Helical transmembrane passes span 321 to 343 (LARFLIALPVGALLGGWIATRVG) and 344 to 364 (DRAVTAVGLLIAAGGFYLIAQ). The Periplasmic portion of the chain corresponds to 365-384 (WPADVLESRHDLGFVSLPTL). The tract at residues 373 to 382 (RHDLGFVSLP) is beta-hairpin. Residues 385–407 (DTDLAIAGFGLGLVIAPLTSAAL) traverse the membrane as a helical segment. The Cytoplasmic segment spans residues 408–415 (RVVPAAQH). A helical transmembrane segment spans residues 416 to 440 (GIASAAVVVARMIGMLIGIAALSAW). Residues 441–487 (GLYRFNQYLKEQLAALPPAPADFPGGQMAGQMMRLRTATVQAYVLQY) lie on the Periplasmic side of the membrane. A helical transmembrane segment spans residues 488 to 507 (GEIFAITAGLCVFGAVLGLF). At 508 to 535 (IAGRREHAEESADAVDGVSNARDRAPSA) the chain is on the cytoplasmic side.

The protein belongs to the major facilitator superfamily. P55 (TC 2.A.1.3.34) family.

It localises to the cell inner membrane. In association with lipoprotein LprG transports triacylglycerides (TAG) across the inner cell membrane, probably transfering them to lipoprotein LprG in the periplasm. TAG probably regulates lipid metabolism and growth regulation and plays a structural role in the outer membrane. Mutagenesis and molecular modeling suggests TAG (and maybe other lipids) enters the central cavity of the P55 transporter from within the cell inner membrane via clefts on the cytoplasmic face of P55 between TM5-TM8 and TM2-TM11. From there the lipid is probably transferred to the hydrophobic cavity of LprG. The lprG-MHAS_02167/C731_2107 operon complements the vancomycin sensitivity of an M.smegmatis knockout of the same operon. Probably required with LprG for normal surface localization of lipoarabinomannan (LAM). This Mycolicibacterium hassiacum (strain DSM 44199 / CIP 105218 / JCM 12690 / 3849) (Mycobacterium hassiacum) protein is Triacylglyceride transporter MHAS_02168/C731_2106.